Here is a 301-residue protein sequence, read N- to C-terminus: Probable alpha-L-glutamate ligase 2 (301 aa).

Residues Leu104–Glu287 form the ATP-grasp domain. ATP is bound by residues Lys141, Glu178–Tyr179, Asp187, and Arg211–Asn213. Positions 248, 260, and 262 each coordinate Mg(2+). 3 residues coordinate Mn(2+): Asp248, Glu260, and Asn262.

Belongs to the RimK family. Mg(2+) serves as cofactor. It depends on Mn(2+) as a cofactor.

This chain is Probable alpha-L-glutamate ligase 2, found in Shewanella amazonensis (strain ATCC BAA-1098 / SB2B).